The sequence spans 245 residues: Small ribosomal subunit protein uS3 (245 aa).

The KH type-2 domain maps to 39–108 (IRNYIKKNYY…SVFVNVQEVK (70 aa)).

It belongs to the universal ribosomal protein uS3 family. In terms of assembly, part of the 30S ribosomal subunit. Forms a tight complex with proteins S10 and S14.

Its function is as follows. Binds the lower part of the 30S subunit head. Binds mRNA in the 70S ribosome, positioning it for translation. The chain is Small ribosomal subunit protein uS3 from Dictyoglomus turgidum (strain DSM 6724 / Z-1310).